Here is a 442-residue protein sequence, read N- to C-terminus: Tubulin beta chain (442 aa).

8 residues coordinate GTP: Gln11, Glu69, Ser138, Gly142, Thr143, Gly144, Asn204, and Asn226. Mg(2+) is bound at residue Glu69.

The protein belongs to the tubulin family. In terms of assembly, dimer of alpha and beta chains. A typical microtubule is a hollow water-filled tube with an outer diameter of 25 nm and an inner diameter of 15 nM. Alpha-beta heterodimers associate head-to-tail to form protofilaments running lengthwise along the microtubule wall with the beta-tubulin subunit facing the microtubule plus end conferring a structural polarity. Microtubules usually have 13 protofilaments but different protofilament numbers can be found in some organisms and specialized cells. Mg(2+) is required as a cofactor.

It localises to the cytoplasm. The protein localises to the cytoskeleton. In terms of biological role, tubulin is the major constituent of microtubules, a cylinder consisting of laterally associated linear protofilaments composed of alpha- and beta-tubulin heterodimers. Microtubules grow by the addition of GTP-tubulin dimers to the microtubule end, where a stabilizing cap forms. Below the cap, tubulin dimers are in GDP-bound state, owing to GTPase activity of alpha-tubulin. This chain is Tubulin beta chain (bPT2), found in Paramecium tetraurelia.